Here is a 276-residue protein sequence, read N- to C-terminus: Phosducin-like protein 1 (276 aa).

Phosphoserine occurs at positions 18, 19, 20, and 42. The tract at residues 18–74 (SSSEGEDNGDEGGDNKGASGKSRCSGLTIDTNPDATPAGGFRQQSSTNTGPKGVVKD) is disordered. Positions 62–272 (SSTNTGPKGV…LIEHGIIVDR (211 aa)) constitute a Phosducin domain. Residues 153–276 (FGQVQQLTSH…GIIVDRALYN (124 aa)) form a thioredoxin fold region.

The protein belongs to the phosducin family. As to quaternary structure, forms a complex with the beta and gamma subunits of the GTP-binding proteins. Interacts with the CCT chaperonin complex.

Functionally, functions as a co-chaperone for CCT in the assembly of heterotrimeric G protein complexes, facilitates the assembly of both Gbeta-Ggamma and RGS-Gbeta5 heterodimers. This is Phosducin-like protein 1 from Drosophila melanogaster (Fruit fly).